The following is a 226-amino-acid chain: Adenylate kinase (226 aa).

12-17 (GSGKGT) is an ATP binding site. Positions 32-61 (ESGAIFREHIGGGTELGLKAKEYIERGDLV) are NMP. AMP is bound by residues Ser-33, Arg-38, 59-61 (DLV), 87-90 (GFPR), and Gln-94. Residues 128-171 (GRRLCVNDNNHPNHIAFEAIKPVEKDGKLVCRVCGGDLKTRPDD) form an LID region. An ATP-binding site is contributed by Arg-129. AMP-binding residues include Arg-168 and Arg-180. Ala-213 provides a ligand contact to ATP.

It belongs to the adenylate kinase family. As to quaternary structure, monomer.

The protein resides in the cytoplasm. The catalysed reaction is AMP + ATP = 2 ADP. Its pathway is purine metabolism; AMP biosynthesis via salvage pathway; AMP from ADP: step 1/1. Functionally, catalyzes the reversible transfer of the terminal phosphate group between ATP and AMP. Plays an important role in cellular energy homeostasis and in adenine nucleotide metabolism. This Desulfotalea psychrophila (strain LSv54 / DSM 12343) protein is Adenylate kinase.